A 161-amino-acid chain; its full sequence is MNLLRPKLKYFILAILIIAADLYTKYLANTYLEFAQSVKITSFFNLTLLYNHGAAFSLLSNDQTSWQMIMFSTISLIAAIVLIYLIIKQPITEKINLFSFALILGGALGNFYDRAFQGYVIDFLDFHIGNYHWPSFNIADSAITCGVVILIAASLFTKKKS.

4 consecutive transmembrane segments (helical) span residues 8-28 (LKYF…KYLA), 40-60 (ITSF…SLLS), 67-87 (QMIM…YLII), and 91-111 (ITEK…LGNF). Residues aspartate 122 and aspartate 140 contribute to the active site. The helical transmembrane segment at 136–156 (FNIADSAITCGVVILIAASLF) threads the bilayer.

It belongs to the peptidase A8 family.

Its subcellular location is the cell inner membrane. The catalysed reaction is Release of signal peptides from bacterial membrane prolipoproteins. Hydrolyzes -Xaa-Yaa-Zaa-|-(S,diacylglyceryl)Cys-, in which Xaa is hydrophobic (preferably Leu), and Yaa (Ala or Ser) and Zaa (Gly or Ala) have small, neutral side chains.. Its pathway is protein modification; lipoprotein biosynthesis (signal peptide cleavage). In terms of biological role, this protein specifically catalyzes the removal of signal peptides from prolipoproteins. The chain is Lipoprotein signal peptidase from Francisella tularensis subsp. novicida (strain U112).